Consider the following 100-residue polypeptide: Small ribosomal subunit protein uS17 (100 aa).

Belongs to the universal ribosomal protein uS17 family. Part of the 30S ribosomal subunit.

One of the primary rRNA binding proteins, it binds specifically to the 5'-end of 16S ribosomal RNA. The protein is Small ribosomal subunit protein uS17 of Fervidobacterium nodosum (strain ATCC 35602 / DSM 5306 / Rt17-B1).